Reading from the N-terminus, the 371-residue chain is Polar tube protein 1 (371 aa).

Positions 1-22 (MKGISKVLSASIVLMKLKGVYS) are cleaved as a signal peptide. Composition is skewed to low complexity over residues 65-94 (PSTP…SPTE) and 255-270 (TSGT…QSGQ). Disordered stretches follow at residues 65–95 (PSTP…PTED) and 229–270 (QSSG…QSGQ).

Post-translationally, glycosylated.

The protein localises to the spore polar tube. Its function is as follows. Involved with PTP2 and PTP3 in formation of a polar tube through which the infectious agent is passed on to the host cell. In Encephalitozoon intestinalis (Microsporidian parasite), this protein is Polar tube protein 1 (PTP1).